Reading from the N-terminus, the 407-residue chain is Multidrug resistance protein MdtH (407 aa).

A run of 10 helical transmembrane segments spans residues 13–33 (CFLI…FPLI), 88–108 (LGFI…SCML), 139–159 (VLML…TWLL), 163–183 (FKLV…FNAW), 210–230 (FVIY…VMLM), 247–267 (WMYI…TWWS), 277–297 (LMVG…VKNL), 298–318 (HTLL…EPAR), 340–360 (LSLA…YDIG), and 368–388 (LPWI…YCQF).

This sequence belongs to the major facilitator superfamily. DHA1 family. MdtH (TC 2.A.1.2.21) subfamily.

The protein localises to the cell inner membrane. In Blochmanniella pennsylvanica (strain BPEN), this protein is Multidrug resistance protein MdtH.